The sequence spans 377 residues: Chaperone protein DnaJ (377 aa).

The J domain occupies 5 to 70 (DYYEVLGVSR…DKKAAYDQFG (66 aa)). Residues 133–211 (GLTKELRIPT…CHGDGRVEKS (79 aa)) form a CR-type zinc finger. Zn(2+)-binding residues include cysteine 146, cysteine 149, cysteine 163, cysteine 166, cysteine 185, cysteine 188, cysteine 199, and cysteine 202. CXXCXGXG motif repeat units follow at residues 146-153 (CDLCEGSG), 163-170 (CGTCHGQG), 185-192 (CPTCHGRG), and 199-206 (CSKCHGDG).

This sequence belongs to the DnaJ family. In terms of assembly, homodimer. Requires Zn(2+) as cofactor.

It localises to the cytoplasm. Its function is as follows. Participates actively in the response to hyperosmotic and heat shock by preventing the aggregation of stress-denatured proteins and by disaggregating proteins, also in an autonomous, DnaK-independent fashion. Unfolded proteins bind initially to DnaJ; upon interaction with the DnaJ-bound protein, DnaK hydrolyzes its bound ATP, resulting in the formation of a stable complex. GrpE releases ADP from DnaK; ATP binding to DnaK triggers the release of the substrate protein, thus completing the reaction cycle. Several rounds of ATP-dependent interactions between DnaJ, DnaK and GrpE are required for fully efficient folding. Also involved, together with DnaK and GrpE, in the DNA replication of plasmids through activation of initiation proteins. The sequence is that of Chaperone protein DnaJ from Shewanella baltica (strain OS195).